The sequence spans 624 residues: Chromosomal replication initiator protein DnaA (624 aa).

The segment at 1 to 99 is domain I, interacts with DnaA modulators; sequence MADVPADLAA…SAGEPPSPPA (99 aa). The interval 88-284 is disordered; it reads DDSAGEPPSP…APGPGEPHAR (197 aa). The interval 100-283 is domain II; that stretch reads PPMHQSHQSQ…PAPGPGEPHA (184 aa). Residues 102–112 are compositionally biased toward low complexity; it reads MHQSHQSQQGH. Basic and acidic residues-rich tracts occupy residues 118-141 and 176-206; these read QRDD…DGMP and GYQD…REQA. The segment covering 250 to 264 has biased composition (gly residues); that stretch reads PRQGGHGPGRTGGSV. Residues 284 to 500 form a domain III, AAA+ region region; the sequence is RLNPKYLFDT…GALIRVTAFA (217 aa). Residues Gly-328, Gly-330, Lys-331, and Thr-332 each coordinate ATP. Residues 501 to 624 are domain IV, binds dsDNA; it reads SLNRQPVDLG…TELTNRIKNG (124 aa).

It belongs to the DnaA family. In terms of assembly, oligomerizes as a right-handed, spiral filament on DNA at oriC.

It localises to the cytoplasm. Functionally, plays an essential role in the initiation and regulation of chromosomal replication. ATP-DnaA binds to the origin of replication (oriC) to initiate formation of the DNA replication initiation complex once per cell cycle. Binds the DnaA box (a 9 base pair repeat at the origin) and separates the double-stranded (ds)DNA. Forms a right-handed helical filament on oriC DNA; dsDNA binds to the exterior of the filament while single-stranded (ss)DNA is stabiized in the filament's interior. The ATP-DnaA-oriC complex binds and stabilizes one strand of the AT-rich DNA unwinding element (DUE), permitting loading of DNA polymerase. After initiation quickly degrades to an ADP-DnaA complex that is not apt for DNA replication. Binds acidic phospholipids. The DnaA box consensus is 5'-(T/C)(T/C)(G/AC)TCCACA-3'. The polypeptide is Chromosomal replication initiator protein DnaA (Streptomyces anulatus (Streptomyces chrysomallus)).